Reading from the N-terminus, the 252-residue chain is Maintenance of carboxysome distribution protein A (252 aa).

The ATP site is built by Gly-11, Gly-12, Gly-14, Lys-15, Thr-16, Thr-17, Gln-41, Glu-147, Lys-151, Phe-182, Arg-183, Leu-216, Glu-217, and Ser-218. Thr-16 contacts Mg(2+).

Belongs to the ParA family. McdA subfamily. As to quaternary structure, self-associates (probably a homodimer), interacts with McdB probably via the C-terminus of both proteins. Shows no signs of filament formation. Homodimerizes in the presence of ATP, making extra nucleotide contacts than with ADP or AMP-PNP. Each subunit binds 1 ATP molecule; Glu-147, Lys-151 and Arg-183 cross the dimer interface to contact ATP in the other subunit, while Phe-182, Arg-183 and Phe-221 stack with the adenine base in their own subunit.

Its subcellular location is the cytoplasm. The protein localises to the nucleoid. The catalysed reaction is ATP + H2O = ADP + phosphate + H(+). Functionally, mcdA and McdB together mediate carboxysome (Cb) spacing, size, ultrastructure and probably inheritance in the cell. Together they prevent Cb aggregation. McdA is an ATPase that forms dynamic gradients on the nucleoid in response to adapter protein McdB, which associates with carboxysomes. The interplay between McdA gradients on the nucleoid and McdB-bound carboxysomes result in the equal spacing of Cbs along the cell length. Binds nucleoid DNA in an ATP-dependent manner; neither ADP nor ATP-gamma-S support DNA binding. Upon ATP-binding dimerizes and binds nucleoid DNA; the (McdA-ATP)2 dimer transiently binds McdB-bound Cbs. McdA's ATPase activity is stimulated 2-fold by DNA and McdB; ATP hydrolysis causes McdA release from DNA. Overexpression leads to loss of McdA oscillation, diffuse nucleoid staining by McdA with formation of large carboxysome aggregates that are in regions depleted of McdA; McdA remains nucleoid-associated. In terms of biological role, mutagenesis studies (characterized in vivo) suggest ATP binding, protein dimerization and a conformational change are necessary for nucleoid DNA-binding and binding to McdB-bound Cbs, which tethers Cbs to the nucleoid. Eventual McdB-stimulated ATP hydrolysis causes de-dimerization of McdA which no longer binds the nucleoid and releases McdB and Cbs. McdB-bound Cbs then move to a region of higher McdA concentration, distributing Cbs across the nucleoid. Incorrect positioning (aggregation) of carboxysomes results in reduced CO(2) fixation by encapsulated ribulose-1,5-bisphosphate carboxylase (RuBisCO, cbbL/cbbS), which leads to slower growth, cell elongation, asymmetric cell division and an increase in RuBisCO levels. The sequence is that of Maintenance of carboxysome distribution protein A from Synechococcus elongatus (strain ATCC 33912 / PCC 7942 / FACHB-805) (Anacystis nidulans R2).